Reading from the N-terminus, the 589-residue chain is Muscarinic acetylcholine receptor M3 (589 aa).

Over 1-66 (MTLHSNSTTS…DPLGGHTIWQ (66 aa)) the chain is Extracellular. N-linked (GlcNAc...) asparagine glycans are attached at residues Asn-6, Asn-15, Asn-41, Asn-48, and Asn-52. A helical membrane pass occupies residues 67–90 (VVFIAFLTGFLALVTIIGNILVIV). The Cytoplasmic portion of the chain corresponds to 91 to 103 (AFKVNKQLKTVNN). The helical transmembrane segment at 104 to 129 (YFLLSLACADLIIGVISMNLFTTYII) threads the bilayer. Residues 130–141 (MNRWALGNLACD) lie on the Extracellular side of the membrane. A disulfide bridge links Cys-140 with Cys-220. A helical transmembrane segment spans residues 142-163 (LWLSIDYVASNASVMNLLVISF). The Cytoplasmic portion of the chain corresponds to 164–183 (DRYFSITRPLTYRAKRTTKR). A helical transmembrane segment spans residues 184–205 (AGVMIGLAWVISFVLWAPAILF). Over 206–228 (WQYFVGKRTVPPGECFIQFLSEP) the chain is Extracellular. A helical membrane pass occupies residues 229–251 (TITFGTAIAAFYMPVTIMTILYW). Topologically, residues 252-490 (RIYKETEKRT…SLIKEKKAAQ (239 aa)) are cytoplasmic. The Basolateral sorting signal motif lies at 274–280 (AEAENFV). Disordered regions lie at residues 275 to 295 (EAEN…YELQ) and 323 to 356 (AEQM…EEDI). Polar residues predominate over residues 283–295 (TGSSRSCSSYELQ). A compositionally biased stretch (low complexity) spans 333 to 344 (SDSWNNNDAAAS). Phosphoserine is present on Ser-384. A helical transmembrane segment spans residues 491–513 (TLSAILLAFIITWTPYNIMVLVN). Residues 514 to 525 (TFCDSCIPKTYW) are Extracellular-facing. A disulfide bond links Cys-516 and Cys-519. A helical transmembrane segment spans residues 526–545 (NLGYWLCYINSTVNPVCYAL). The Cytoplasmic segment spans residues 546 to 589 (CNKTFRTTFKMLLLCQCDKRKRRKQQYQQRQSVIFHKRVPEQAL).

It belongs to the G-protein coupled receptor 1 family. Muscarinic acetylcholine receptor subfamily. CHRM3 sub-subfamily. Homodimer; the dimers can form tetramers. Interacts with NALCN. Interacts with TMEM147. In terms of tissue distribution, expressed in cerebral cortex, submandibular gland, hypothalamus, pancreas, liver, and ileum.

It localises to the cell membrane. The protein localises to the postsynaptic cell membrane. The protein resides in the basolateral cell membrane. Its subcellular location is the endoplasmic reticulum membrane. Functionally, the muscarinic acetylcholine receptor mediates various cellular responses, including inhibition of adenylate cyclase, breakdown of phosphoinositides and modulation of potassium channels through the action of G proteins. Primary transducing effect is Pi turnover. In Mus musculus (Mouse), this protein is Muscarinic acetylcholine receptor M3 (Chrm3).